A 3930-amino-acid chain; its full sequence is Hybrid PKS-NRPS synthetase apdA (3930 aa).

Residues 2–440 (QDLIAIVGSA…GTNAHAIIEG (439 aa)) enclose the Ketosynthase family 3 (KS3) domain. Active-site for beta-ketoacyl synthase activity residues include Cys-176, His-313, and His-361. The segment at 557–879 (IFTGQGAQWA…MRRGDNEIEA (323 aa)) is malonyl-CoA:ACP transacylase (MAT) domain. The interval 948–1085 (HELLGRRVPD…GRLIINYGDP (138 aa)) is N-terminal hotdog fold. Residues 948–1251 (HELLGRRVPD…SMKSMSEPQP (304 aa)) are dehydratase (DH) domain. A PKS/mFAS DH domain is found at 948-1252 (HELLGRRVPD…MKSMSEPQPE (305 aa)). The active-site Proton acceptor; for dehydratase activity is the His-980. The interval 1100–1252 (NVPVDMGRFY…MKSMSEPQPE (153 aa)) is C-terminal hotdog fold. Asp-1159 serves as the catalytic Proton donor; for dehydratase activity. The segment at 1389 to 1588 (QDDMLNRFYM…FSGLDCLAPD (200 aa)) is methyltransferase (MT) domain. The ketoreductase (KR) domain stretch occupies residues 2088-2229 (ATYLLAGMTG…SLASIIGNAA (142 aa)). Positions 2326 to 2403 (AVIPIVQEAF…QICEDAVRQF (78 aa)) constitute a Carrier 1 domain. Residue Ser-2363 is modified to O-(pantetheine 4'-phosphoryl)serine. Disordered stretches follow at residues 2414–2433 (VAPN…SNAT) and 2444–2494 (DAAN…VDAD). The span at 2445–2473 (AANGDYESSSQGDDSRGNSSSSSSHTSPS) shows a compositional bias: low complexity. Residues 2509–2937 (PASFAQSRLW…SLPVNQLPVT (429 aa)) form a condensation (C) domain region. Residues 2971 to 3371 (KSFPEETAIK…GTLIFMGRMD (401 aa)) are adenylation (A) (KR) domain. The reductase (RED) domain stretch occupies residues 2971–3371 (KSFPEETAIK…GTLIFMGRMD (401 aa)). Positions 3493–3572 (RHLSLAEGEL…QMARRISRRK (80 aa)) constitute a Carrier 2 domain. The residue at position 3532 (Ser-3532) is an O-(pantetheine 4'-phosphoryl)serine.

In the C-terminal section; belongs to the NRP synthetase family.

It participates in secondary metabolite biosynthesis. Functionally, hybrid PKS-NRPS synthetase; part of the gene cluster that mediates the biosynthesis of aspyridones. The polyketide-amino acid backbone preaspyridone A is first assembled by the PKS-NRPS hybrid apdA. The assembly of preaspyridone A is initiated by loading of malonyl-CoA onto apdA, followed by decarboxylation to yield the acetyl starter unit. The growing polyketide chain then elongates into a tetraketide. The adpA PKS module catalyzes three Claisen condensations, as well as beta-keto processing and methylation. Alpha-methylation step during polyketide synthesis is a prerequisite and a key checkpoint for chain transfer between PKS and NRPS modules. The downstream NRPS module contains the condensation (C), adenylation (A), and thiolation (T) domains and catalyzes the incorporation of tyrosine via the formation of the L-tyrosinyl-thioester and the amide linkage between L-tyrosinyl-thioester and the tetraketide. The bimodular assembly line is terminated with a reductase (R) domain that facilitates formation and release of the tetramic acid product. Because apdA lacks a designated enoylreductase (ER) domain, the required activity is provided the enoyl reductase apdC. ApdC appears to operate with different stereoselectivity in different PKS cycle. Combined with apdC, apdA is proposed to synthesize preaspyridone A via about 20 enzymatic steps. A number of oxidative steps performed successively by the cytochrome P450 monooxygenases apdE and apdB are required for the conversion of preaspyridone A to aspyridone A. The cytochrome P450 monooxygenase apdE is responsible for the oxidative dephenylation of preaspyridone A. Finally, the predicted FAD-dependent monooxygenase apdD and the acyl-CoA dehydrogenase apdG may be involved in the transformation of aspyridone A into aspyridone B. This chain is Hybrid PKS-NRPS synthetase apdA, found in Emericella nidulans (strain FGSC A4 / ATCC 38163 / CBS 112.46 / NRRL 194 / M139) (Aspergillus nidulans).